The chain runs to 300 residues: Spermine synthase SPE4 (300 aa).

Ser-5 is subject to Phosphoserine. The 244-residue stretch at 12 to 255 (DGWFREINDK…GQLGLIVCSN (244 aa)) folds into the PABS domain. S-adenosyl 3-(methylsulfanyl)propylamine-binding positions include Gln-44, Asp-99, Glu-119, and 151 to 152 (DG). Catalysis depends on Asp-174, which acts as the Proton acceptor. Asp-177 lines the spermidine pocket.

The protein belongs to the spermidine/spermine synthase family.

It carries out the reaction S-adenosyl 3-(methylsulfanyl)propylamine + spermidine = spermine + S-methyl-5'-thioadenosine + H(+). Its pathway is amine and polyamine biosynthesis; spermine biosynthesis; spermine from spermidine: step 1/1. In Saccharomyces cerevisiae (strain ATCC 204508 / S288c) (Baker's yeast), this protein is Spermine synthase SPE4 (SPE4).